The following is a 450-amino-acid chain: Flavin-containing monooxygenase FMO GS-OX-like 3 (450 aa).

An FAD-binding site is contributed by 17-22; that stretch reads GAGPAG. NADP(+) is bound at residue 215 to 220; it reads GNSSSA.

The protein belongs to the FMO family. It depends on FAD as a cofactor.

Its function is as follows. Catalyzes the conversion of methylthioalkyl glucosinolates of any chain length into methylsulfinylalkyl glucosinolates. This is Flavin-containing monooxygenase FMO GS-OX-like 3 from Arabidopsis thaliana (Mouse-ear cress).